Here is a 155-residue protein sequence, read N- to C-terminus: SsrA-binding protein (155 aa).

This sequence belongs to the SmpB family.

It is found in the cytoplasm. Functionally, required for rescue of stalled ribosomes mediated by trans-translation. Binds to transfer-messenger RNA (tmRNA), required for stable association of tmRNA with ribosomes. tmRNA and SmpB together mimic tRNA shape, replacing the anticodon stem-loop with SmpB. tmRNA is encoded by the ssrA gene; the 2 termini fold to resemble tRNA(Ala) and it encodes a 'tag peptide', a short internal open reading frame. During trans-translation Ala-aminoacylated tmRNA acts like a tRNA, entering the A-site of stalled ribosomes, displacing the stalled mRNA. The ribosome then switches to translate the ORF on the tmRNA; the nascent peptide is terminated with the 'tag peptide' encoded by the tmRNA and targeted for degradation. The ribosome is freed to recommence translation, which seems to be the essential function of trans-translation. This Bordetella bronchiseptica (strain ATCC BAA-588 / NCTC 13252 / RB50) (Alcaligenes bronchisepticus) protein is SsrA-binding protein.